Here is a 297-residue protein sequence, read N- to C-terminus: Putative S-adenosyl-L-methionine-dependent methyltransferase Mjls_1072 (297 aa).

S-adenosyl-L-methionine contacts are provided by residues D124 and 153 to 154 (DL).

The protein belongs to the UPF0677 family.

Its function is as follows. Exhibits S-adenosyl-L-methionine-dependent methyltransferase activity. The protein is Putative S-adenosyl-L-methionine-dependent methyltransferase Mjls_1072 of Mycobacterium sp. (strain JLS).